We begin with the raw amino-acid sequence, 131 residues long: Small ribosomal subunit protein uS11 (131 aa).

The protein belongs to the universal ribosomal protein uS11 family. In terms of assembly, part of the 30S ribosomal subunit. Interacts with proteins S7 and S18. Binds to IF-3.

Its function is as follows. Located on the platform of the 30S subunit, it bridges several disparate RNA helices of the 16S rRNA. Forms part of the Shine-Dalgarno cleft in the 70S ribosome. This is Small ribosomal subunit protein uS11 from Deinococcus radiodurans (strain ATCC 13939 / DSM 20539 / JCM 16871 / CCUG 27074 / LMG 4051 / NBRC 15346 / NCIMB 9279 / VKM B-1422 / R1).